Here is a 232-residue protein sequence, read N- to C-terminus: Small ribosomal subunit protein uS2 (232 aa).

It belongs to the universal ribosomal protein uS2 family.

This is Small ribosomal subunit protein uS2 from Alkaliphilus oremlandii (strain OhILAs) (Clostridium oremlandii (strain OhILAs)).